A 543-amino-acid polypeptide reads, in one-letter code: Putative inorganic phosphate export protein YjbB (543 aa).

Helical transmembrane passes span 1–21 (MLTLLHLLSAVALLVWGTHIV), 48–68 (FCAGIGVTALVQSSNATTMLV), 76–96 (LVALAPALVIVLGADVGTALM), 99–119 (ILTFDLSWLSPLLIFIGVIFF), 134–154 (GIGLGLILLALELIVQAVTPI), 175–195 (ALIGAMFAIISYSSLAAVLLT), 196–216 (ATLTAAGIISFPVALCLVIGA), 240–260 (LGSLLFKLVGSLIILPFVHLL), and 274–294 (LVIYFHVFYNLVRCLVMLPFV).

Belongs to the YjbB family.

It localises to the cell inner membrane. The enzyme catalyses phosphate(in) = phosphate(out). Might be involved in phosphate export. Overproduction of YjbB reduces the elevated levels of polyphosphate (polyP) in a phoU mutant that accumulates 1000-fold higher levels of polyP than the wild type, suggesting that YjbB exports excess intracellular phosphate (Pi) in the phoU mutant and thus reduces the levels of polyP. The sequence is that of Putative inorganic phosphate export protein YjbB (yjbB) from Escherichia coli (strain K12).